The following is a 301-amino-acid chain: MSLIRGLISTIYYLPKIYKWFYRPYYFLSLLMTLAFVIVRCCPGLCEHLPSQREDGDSCAFDWREVEIFMFLGAIVMMKNRRAVTVEQHIGNIFLFSKVANVVLFFRVDLRFGLLYLTLCVVFLITCKPPAYMGPENIKYFRDSTIDEELQRDSRVTWIVEFYANWSPECQSFAPIFADLSLKYTCLGLKFGKVDIGHYGAVAERYKVNPSPLCKQLPSLLMLQAGRELMRRPLVDKKGRAVSWNFTEDNIIRDFNLNEIFQKYKKFSKGEKPEEPQPVLEEESESPLEEEEEDSESKKDK.

The N-terminal stretch at 1 to 19 is a signal peptide; the sequence is MSLIRGLISTIYYLPKIYK. The Extracellular portion of the chain corresponds to 20–111; sequence WFYRPYYFLS…VVLFFRVDLR (92 aa). A helical transmembrane segment spans residues 112-132; the sequence is FGLLYLTLCVVFLITCKPPAY. A Thioredoxin domain is found at 122–269; sequence VFLITCKPPA…IFQKYKKFSK (148 aa). Topologically, residues 133–301 are cytoplasmic; the sequence is MGPENIKYFR…EEDSESKKDK (169 aa). Residues 268 to 301 are disordered; the sequence is SKGEKPEEPQPVLEEESESPLEEEEEDSESKKDK. Over residues 280–295 the composition is skewed to acidic residues; the sequence is LEEESESPLEEEEEDS. Positions 298–301 match the Di-lysine motif motif; that stretch reads KKDK.

In terms of assembly, monomer. Homodimer; disulfide-linked. Occurs in both reduced and oxidized monomeric form. Oxidative conditions increase homodimerization.

Its subcellular location is the endoplasmic reticulum membrane. The protein resides in the mitochondrion membrane. In terms of biological role, endoplasmic reticulum and mitochondria-associated protein that probably functions as a regulator of cellular redox state and thereby regulates protein post-translational modification, protein folding and mitochondrial activity. This Danio rerio (Zebrafish) protein is Thioredoxin-related transmembrane protein 2-A.